A 108-amino-acid polypeptide reads, in one-letter code: UPF0060 membrane protein KPN78578_15550 (108 aa).

4 helical membrane-spanning segments follow: residues 6 to 26 (LLFF…WLWL), 29 to 49 (GATP…VWLL), 61 to 81 (AAYG…VDGV), and 86 to 106 (YDWA…AGWG).

Belongs to the UPF0060 family.

It is found in the cell inner membrane. The chain is UPF0060 membrane protein KPN78578_15550 from Klebsiella pneumoniae subsp. pneumoniae (strain ATCC 700721 / MGH 78578).